A 344-amino-acid chain; its full sequence is Adenosine kinase 1 (344 aa).

The active site involves Asp-299.

Belongs to the carbohydrate kinase PfkB family. Interacts with the begomovirus AL2 protein and the curtovirus L2 protein. The cofactor is Mg(2+). In terms of tissue distribution, widely expressed.

The catalysed reaction is adenosine + ATP = AMP + ADP + H(+). The protein operates within purine metabolism; AMP biosynthesis via salvage pathway; AMP from adenosine: step 1/1. With respect to regulation, inactivated by the begomovirus AL2 protein or the curtovirus L2 protein. Functionally, ATP dependent phosphorylation of adenosine and other related nucleoside analogs to monophosphate derivatives. Essential to sustain methyl recycling. In Arabidopsis thaliana (Mouse-ear cress), this protein is Adenosine kinase 1.